Consider the following 191-residue polypeptide: Apoptosis regulator BHRF1 (191 aa).

The interaction with host VRK2 stretch occupies residues 1 to 18 (MAYSTREILLALCIRDSR). An N-linked (GlcNAc...) asparagine; by host glycan is attached at asparagine 22. The BH1 signature appears at 89-109 (EIFHRGDPSLGRALAWMAWCM). The interaction with host VRK2 stretch occupies residues 89–142 (EIFHRGDPSLGRALAWMAWCMHACRTLCCNQSTPYYVVDLSVRGMLEASEGLDG). A glycan (N-linked (GlcNAc...) asparagine; by host) is linked at asparagine 118. The short motif at 142–157 (GWIHQQGGWSTLIEDN) is the BH2 element. A helical membrane pass occupies residues 166-186 (WTLFLAGLTLSLLVICSYLFI).

The protein belongs to the Bcl-2 family. Interacts with isoform 1 of host VRK2; this interaction is involved in protecting cells from apoptosis. Interacts with host PRA1; this interaction seems to modulate BHRF1 anti-apoptotic activity. Interacts with host BCL2L11. Interacts with host BAD and BBC3. Interacts with BALF1; BALF1 acting as a negative regulator of the survival function of BHRF1. Interacts with host BECN1.

Its subcellular location is the host membrane. The protein localises to the host mitochondrion. In terms of biological role, prevents premature death of the host cell during virus production, which would otherwise reduce the amount of progeny virus. Acts as a host B-cell leukemia/lymphoma 2 (Bcl-2) homolog, and interacts with pro-apoptotic proteins to prevent mitochondria permeabilization, release of cytochrome c and subsequent apoptosis of the host cell. In addition, plays a role in the inhibiton of host BECN1-mediated starvation-induced autophagy without affecting basal levels of autophagy. This chain is Apoptosis regulator BHRF1, found in Epstein-Barr virus (strain GD1) (HHV-4).